Consider the following 672-residue polypeptide: DNA ligase (672 aa).

NAD(+) is bound by residues 32–36, 81–82, and Glu114; these read DSEYD and SL. Lys116 serves as the catalytic N6-AMP-lysine intermediate. NAD(+)-binding residues include Arg137, Glu174, Lys291, and Lys315. Positions 409, 412, 427, and 433 each coordinate Zn(2+). One can recognise a BRCT domain in the interval 592 to 672; the sequence is VNENPFKEKT…EFLEIVNSFS (81 aa).

This sequence belongs to the NAD-dependent DNA ligase family. LigA subfamily. Requires Mg(2+) as cofactor. Mn(2+) is required as a cofactor.

It carries out the reaction NAD(+) + (deoxyribonucleotide)n-3'-hydroxyl + 5'-phospho-(deoxyribonucleotide)m = (deoxyribonucleotide)n+m + AMP + beta-nicotinamide D-nucleotide.. Functionally, DNA ligase that catalyzes the formation of phosphodiester linkages between 5'-phosphoryl and 3'-hydroxyl groups in double-stranded DNA using NAD as a coenzyme and as the energy source for the reaction. It is essential for DNA replication and repair of damaged DNA. In Actinobacillus succinogenes (strain ATCC 55618 / DSM 22257 / CCUG 43843 / 130Z), this protein is DNA ligase.